The following is a 256-amino-acid chain: Probable ABC transporter ATP-binding protein SPy_0285/M5005_Spy0242 (256 aa).

An ABC transporter domain is found at Leu-4–Gln-246. Gly-36–Ser-43 provides a ligand contact to ATP.

The protein belongs to the ABC transporter superfamily. Ycf16 family.

Its subcellular location is the cell membrane. This is Probable ABC transporter ATP-binding protein SPy_0285/M5005_Spy0242 from Streptococcus pyogenes serotype M1.